Reading from the N-terminus, the 352-residue chain is Thiamine-phosphate synthase (352 aa).

A unknown region spans residues 1-128; it reads MNPTPSETSL…AAEAAAIRYG (128 aa). The interval 63 to 85 is disordered; it reads SYKQARSTSTDTGAGLKHPAQLD. The thiamine-phosphate synthase stretch occupies residues 129-352; it reads LYDLEVTCLN…LLQQLDQATI (224 aa). Residues 180–184 and N212 contribute to the 4-amino-2-methyl-5-(diphosphooxymethyl)pyrimidine site; that span reads QYRCK. D213 and D232 together coordinate Mg(2+). 4-amino-2-methyl-5-(diphosphooxymethyl)pyrimidine contacts are provided by S251 and K280. A 2-[(2R,5Z)-2-carboxy-4-methylthiazol-5(2H)-ylidene]ethyl phosphate-binding site is contributed by G307.

It belongs to the thiamine-phosphate synthase family. It depends on Mg(2+) as a cofactor.

It carries out the reaction 2-[(2R,5Z)-2-carboxy-4-methylthiazol-5(2H)-ylidene]ethyl phosphate + 4-amino-2-methyl-5-(diphosphooxymethyl)pyrimidine + 2 H(+) = thiamine phosphate + CO2 + diphosphate. It catalyses the reaction 2-(2-carboxy-4-methylthiazol-5-yl)ethyl phosphate + 4-amino-2-methyl-5-(diphosphooxymethyl)pyrimidine + 2 H(+) = thiamine phosphate + CO2 + diphosphate. The catalysed reaction is 4-methyl-5-(2-phosphooxyethyl)-thiazole + 4-amino-2-methyl-5-(diphosphooxymethyl)pyrimidine + H(+) = thiamine phosphate + diphosphate. The protein operates within cofactor biosynthesis; thiamine diphosphate biosynthesis; thiamine phosphate from 4-amino-2-methyl-5-diphosphomethylpyrimidine and 4-methyl-5-(2-phosphoethyl)-thiazole: step 1/1. In terms of biological role, condenses 4-methyl-5-(beta-hydroxyethyl)thiazole monophosphate (THZ-P) and 2-methyl-4-amino-5-hydroxymethyl pyrimidine pyrophosphate (HMP-PP) to form thiamine monophosphate (TMP). This is Thiamine-phosphate synthase from Synechococcus sp. (strain CC9605).